A 57-amino-acid polypeptide reads, in one-letter code: Serine protease inhibitor Kazal-type 1 (57 aa).

Positions 4 to 57 (LQRQANCNLKVNGCNKIYNPICGSDGITYANECLLCLENKKRQTSILVEKSGPC) constitute a Kazal-like domain. 3 cysteine pairs are disulfide-bonded: C10–C39, C17–C36, and C25–C57.

It localises to the secreted. Its function is as follows. Serine protease inhibitor which exhibits anti-trypsin activity. In the pancreas, protects against trypsin-catalyzed premature activation of zymogens. In terms of biological role, in the male reproductive tract, binds to sperm heads where it modulates sperm capacitance by inhibiting calcium uptake and nitrogen oxide (NO) production. This chain is Serine protease inhibitor Kazal-type 1 (SPINK1), found in Canis lupus familiaris (Dog).